The sequence spans 358 residues: tRNA N6-adenosine threonylcarbamoyltransferase (358 aa).

Fe cation-binding residues include histidine 122 and histidine 126. Residues 145-149 (LVSGG), aspartate 178, glycine 191, and asparagine 287 each bind substrate. Aspartate 315 contacts Fe cation.

The protein belongs to the KAE1 / TsaD family. The cofactor is Fe(2+).

It localises to the cytoplasm. The enzyme catalyses L-threonylcarbamoyladenylate + adenosine(37) in tRNA = N(6)-L-threonylcarbamoyladenosine(37) in tRNA + AMP + H(+). Required for the formation of a threonylcarbamoyl group on adenosine at position 37 (t(6)A37) in tRNAs that read codons beginning with adenine. Is involved in the transfer of the threonylcarbamoyl moiety of threonylcarbamoyl-AMP (TC-AMP) to the N6 group of A37, together with TsaE and TsaB. TsaD likely plays a direct catalytic role in this reaction. In Hydrogenovibrio crunogenus (strain DSM 25203 / XCL-2) (Thiomicrospira crunogena), this protein is tRNA N6-adenosine threonylcarbamoyltransferase.